The sequence spans 185 residues: Ribosome-recycling factor (185 aa).

It belongs to the RRF family.

The protein localises to the cytoplasm. Functionally, responsible for the release of ribosomes from messenger RNA at the termination of protein biosynthesis. May increase the efficiency of translation by recycling ribosomes from one round of translation to another. This Geobacter metallireducens (strain ATCC 53774 / DSM 7210 / GS-15) protein is Ribosome-recycling factor.